The chain runs to 85 residues: NADH-ubiquinone oxidoreductase chain 4L (85 aa).

Transmembrane regions (helical) follow at residues Leu-21 to Tyr-41 and Phe-51 to Leu-71.

Belongs to the complex I subunit 4L family.

The protein localises to the mitochondrion membrane. It carries out the reaction a ubiquinone + NADH + 5 H(+)(in) = a ubiquinol + NAD(+) + 4 H(+)(out). Functionally, core subunit of the mitochondrial membrane respiratory chain NADH dehydrogenase (Complex I) that is believed to belong to the minimal assembly required for catalysis. Complex I functions in the transfer of electrons from NADH to the respiratory chain. The immediate electron acceptor for the enzyme is believed to be ubiquinone. This is NADH-ubiquinone oxidoreductase chain 4L (ND4L) from Artemia franciscana (Brine shrimp).